We begin with the raw amino-acid sequence, 76 residues long: U1-cyrtautoxin-As1b (76 aa).

4 cysteine pairs are disulfide-bonded: Cys23–Cys37, Cys30–Cys51, Cys36–Cys66, and Cys69–Cys76.

It belongs to the neurotoxin 21 family. As to expression, expressed by the venom gland.

Its subcellular location is the secreted. Its function is as follows. Neurotoxin with probable ion channel impairing activity. Is both paralytic and lethal, when injected into lepidopteran larvae. The polypeptide is U1-cyrtautoxin-As1b (Apomastus schlingeri (Trap-door spider)).